A 119-amino-acid polypeptide reads, in one-letter code: Large ribosomal subunit protein bL20 (119 aa).

This sequence belongs to the bacterial ribosomal protein bL20 family.

In terms of biological role, binds directly to 23S ribosomal RNA and is necessary for the in vitro assembly process of the 50S ribosomal subunit. It is not involved in the protein synthesizing functions of that subunit. The protein is Large ribosomal subunit protein bL20 of Clostridium tetani (strain Massachusetts / E88).